A 659-amino-acid chain; its full sequence is Endoglucanase A (659 aa).

The segment at 1-500 (MLIFETYLIL…SKLPNFPPKE (500 aa)) is catalytic. The active-site Nucleophile is Asp101. Positions 413-433 (NSPKHPHHRTAHGSWSNQLTN) are disordered. Catalysis depends on residues His419, Asp457, and Glu466. The CBM3 domain maps to 501–658 (QVEDEFFVEA…GVLVFGTLPD (158 aa)).

This sequence belongs to the glycosyl hydrolase 9 (cellulase E) family.

It localises to the secreted. The catalysed reaction is Endohydrolysis of (1-&gt;4)-beta-D-glucosidic linkages in cellulose, lichenin and cereal beta-D-glucans.. Its activity is regulated as follows. Strongly inhibited by ZnCl(2) and by EDTA. Functionally, active on carboxymethyl cellulose and carboxymethyl cellulose-RBB but not avicel, xanthan gum, carboxymethyl-curdulan-RBB or carboxymethyl-xylan-RBB. This is Endoglucanase A (eglA) from Bacillus pumilus (Bacillus mesentericus).